We begin with the raw amino-acid sequence, 1060 residues long: Isoleucine--tRNA ligase (1060 aa).

The short motif at 55–65 is the 'HIGH' region element; sequence PTANGTPGVHH. Positions 608–612 match the 'KMSKS' region motif; it reads KMSKH. Lys611 lines the ATP pocket.

It belongs to the class-I aminoacyl-tRNA synthetase family. IleS type 2 subfamily. In terms of assembly, monomer. The cofactor is Zn(2+).

It is found in the cytoplasm. The catalysed reaction is tRNA(Ile) + L-isoleucine + ATP = L-isoleucyl-tRNA(Ile) + AMP + diphosphate. Functionally, catalyzes the attachment of isoleucine to tRNA(Ile). As IleRS can inadvertently accommodate and process structurally similar amino acids such as valine, to avoid such errors it has two additional distinct tRNA(Ile)-dependent editing activities. One activity is designated as 'pretransfer' editing and involves the hydrolysis of activated Val-AMP. The other activity is designated 'posttransfer' editing and involves deacylation of mischarged Val-tRNA(Ile). This is Isoleucine--tRNA ligase from Thermobifida fusca (strain YX).